We begin with the raw amino-acid sequence, 215 residues long: NADH-quinone oxidoreductase subunit C (215 aa).

It belongs to the complex I 30 kDa subunit family. As to quaternary structure, NDH-1 is composed of 14 different subunits. Subunits NuoB, C, D, E, F, and G constitute the peripheral sector of the complex.

The protein localises to the cell inner membrane. It carries out the reaction a quinone + NADH + 5 H(+)(in) = a quinol + NAD(+) + 4 H(+)(out). Functionally, NDH-1 shuttles electrons from NADH, via FMN and iron-sulfur (Fe-S) centers, to quinones in the respiratory chain. The immediate electron acceptor for the enzyme in this species is believed to be ubiquinone. Couples the redox reaction to proton translocation (for every two electrons transferred, four hydrogen ions are translocated across the cytoplasmic membrane), and thus conserves the redox energy in a proton gradient. The chain is NADH-quinone oxidoreductase subunit C from Methylobacterium sp. (strain 4-46).